We begin with the raw amino-acid sequence, 577 residues long: Beta-fructofuranosidase, insoluble isoenzyme 1 (577 aa).

The signal sequence occupies residues 1-22 (MGTRLLALAPWLLLLLLQLAGA). Asp63 is a catalytic residue. Residues Asn158, Asn183, and Asn333 are each glycosylated (N-linked (GlcNAc...) asparagine).

This sequence belongs to the glycosyl hydrolase 32 family. Expressed in roots, leaves and flowers. Weakly expressed in seeds.

The protein localises to the secreted. It is found in the extracellular space. It localises to the apoplast. Its subcellular location is the cell wall. The enzyme catalyses Hydrolysis of terminal non-reducing beta-D-fructofuranoside residues in beta-D-fructofuranosides.. May play a role in sucrose partitioning during seed development and in stress response. The protein is Beta-fructofuranosidase, insoluble isoenzyme 1 (CIN1) of Oryza sativa subsp. japonica (Rice).